A 397-amino-acid polypeptide reads, in one-letter code: Zinc finger CCCH domain-containing protein 33 (397 aa).

C3H1-type zinc fingers lie at residues 40 to 68, 85 to 113, 131 to 159, 274 to 302, and 320 to 348; these read RPGE…HPRD, RIGQ…HPRN, RSNE…HPQP, RPGQ…HPRD, and RPGE…HPMR. Positions 361-397 are disordered; sequence EVVETSTGKSRRLSVSETRQAATTSSGKDTTIDNTQQ. Residues 364-397 show a composition bias toward polar residues; the sequence is ETSTGKSRRLSVSETRQAATTSSGKDTTIDNTQQ.

Its subcellular location is the nucleus. The sequence is that of Zinc finger CCCH domain-containing protein 33 (ZFN1) from Arabidopsis thaliana (Mouse-ear cress).